Reading from the N-terminus, the 613-residue chain is RNA polymerase sigma factor RpoD (613 aa).

The segment at 2–80 is sigma-70 factor domain-1; the sequence is EQNPQSQLKL…TADEDAAEAA (79 aa). Residues 176–213 are disordered; the sequence is PTATHVGSELSQEDLDDDEDEDEEDGDDDSADDDNSID. The span at 186-212 shows a compositional bias: acidic residues; that stretch reads SQEDLDDDEDEDEEDGDDDSADDDNSI. The sigma-70 factor domain-2 stretch occupies residues 379 to 449; sequence MVEANLRLVI…TRSIADQART (71 aa). The Interaction with polymerase core subunit RpoC motif lies at 403-406; it reads DLIQ. The sigma-70 factor domain-3 stretch occupies residues 458–534; that stretch reads ETINKLNRIS…DTTLELPLDS (77 aa). Positions 547–600 are sigma-70 factor domain-4; the sequence is VLAGLTAREAKVLRMRFGIDMNTDYTLEEVGKQFDVTRERIRQIEAKALRKLRH. A DNA-binding region (H-T-H motif) is located at residues 573–592; it reads LEEVGKQFDVTRERIRQIEA. Residues 584-599 are interaction with anti-sigma factors; sequence RERIRQIEAKALRKLR.

The protein belongs to the sigma-70 factor family. RpoD/SigA subfamily. Interacts transiently with the RNA polymerase catalytic core formed by RpoA, RpoB, RpoC and RpoZ (2 alpha, 1 beta, 1 beta' and 1 omega subunit) to form the RNA polymerase holoenzyme that can initiate transcription. Identified in a complex containing RpoD, the RNA polymerase subunits RpoA, RpoB and RpoZ, CRP and DNA. Interacts with Rsd; this prevents interaction with the RNA polymerase catalytic core and with promoter DNA, and as a consequence, promotes transcription from promoters that require alternative sigma factors. Interacts with phage T4 AsiA; this interferes with binding to DNA and to the RNA polymerase. In terms of assembly, (Microbial infection) Interacts with Escherichia phage lambda antitermination protein Q.

The protein localises to the cytoplasm. Its function is as follows. Sigma factors are initiation factors that promote the attachment of RNA polymerase to specific initiation sites and are then released. This sigma factor is the primary sigma factor during exponential growth. Preferentially transcribes genes associated with fast growth, such as ribosomal operons, other protein-synthesis related genes, rRNA- and tRNA-encoding genes and prfB. The polypeptide is RNA polymerase sigma factor RpoD (Escherichia coli (strain K12)).